Consider the following 235-residue polypeptide: N-alpha-acetyltransferase 10 (235 aa).

M1 carries the post-translational modification N-acetylmethionine. Positions 1-58 (MNIRNARPEDLMNMQHCNLLCLPENYQMKYYFYHGLSWPQLSYIAEDENGKIVGYVLA) are interaction with NAA15. One can recognise an N-acetyltransferase domain in the interval 1–152 (MNIRNARPED…DAYAMKRDLT (152 aa)). Position 136 is an N6-acetyllysine; by autocatalysis (K136). A disordered region spans residues 178–235 (NKVESKGNSPPSSGEACREEKGLAAEDSGGDSKDLSEVSETTESTDVKDSSEASDSAS). Phosphoserine is present on residues S182, S186, and S205. Basic and acidic residues predominate over residues 193 to 213 (ACREEKGLAAEDSGGDSKDLS). S209 is modified (phosphoserine; by IKKB). 2 positions are modified to phosphoserine: S213 and S216.

The protein belongs to the acetyltransferase family. ARD1 subfamily. Component of the N-terminal acetyltransferase A complex (also called the NatA complex) composed of NAA10 and NAA15. Within the complex interacts with NAA15. Component of the N-terminal acetyltransferase A (NatA)/HYPK complex at least composed of NAA10, NAA15 and HYPK, which has N-terminal acetyltransferase activity. In complex with NAA15, interacts with HYPK. Component of the N-terminal acetyltransferase E (NatE) complex at least composed of NAA10, NAA15 and NAA50. Within the complex interacts with NAA15; the interaction is required for binding to NAAT50. Interacts with NAAT50. The interaction of the NatA complex with NAA50 reduces the acetylation activity of the NatA complex. Component of the N-terminal acetyltransferase E (NatE)/HYPK complex at least composed of NAA10, NAA15, NAA50 and HYPK. In complex with NAA15, interacts with HYPK; the interaction with HYPK reduces the capacity of the NatA complex to interact with NAA50. Interacts with HIF1A (via its ODD domain); the interaction increases HIF1A protein stability during normoxia, an down-regulates it when induced by hypoxia. Interacts with the ribosome. Binds to MYLK. Interacts with NAA16. Interacts (via its C-terminal domain) with TSC2, leading to its acetylation. Interacts with IKBKB. Interacts with HSPA1A and HSPA1B leading to its acetylation. In terms of processing, cleaved by caspases during apoptosis. Phosphorylation by IKBKB/IKKB at Ser-209 promotes its proteasome-mediated degradation. Post-translationally, autoacetylated at Lys-136 which stimulates its catalytic activity. Ubiquitous.

The protein localises to the cytoplasm. Its subcellular location is the nucleus. It catalyses the reaction N-terminal glycyl-[protein] + acetyl-CoA = N-terminal N(alpha)-acetylglycyl-[protein] + CoA + H(+). The enzyme catalyses N-terminal L-alanyl-[protein] + acetyl-CoA = N-terminal N(alpha)-acetyl-L-alanyl-[protein] + CoA + H(+). It carries out the reaction N-terminal L-seryl-[protein] + acetyl-CoA = N-terminal N(alpha)-acetyl-L-seryl-[protein] + CoA + H(+). The catalysed reaction is N-terminal L-valyl-[protein] + acetyl-CoA = N-terminal N(alpha)-acetyl-L-valyl-[protein] + CoA + H(+). It catalyses the reaction N-terminal L-cysteinyl-[protein] + acetyl-CoA = N-terminal N(alpha)-acetyl-L-cysteinyl-[protein] + CoA + H(+). The enzyme catalyses N-terminal L-threonyl-[protein] + acetyl-CoA = N-terminal N(alpha)-acetyl-L-threonyl-[protein] + CoA + H(+). Functionally, catalytic subunit of N-terminal acetyltransferase complexes which display alpha (N-terminal) acetyltransferase activity. Acetylates amino termini that are devoid of initiator methionine. The alpha (N-terminal) acetyltransferase activity may be important for vascular, hematopoietic and neuronal growth and development. Without NAA15, displays epsilon (internal) acetyltransferase activity towards HIF1A, thereby promoting its degradation. Represses MYLK kinase activity by acetylation, and thus represses tumor cell migration. Acetylates, and stabilizes TSC2, thereby repressing mTOR activity and suppressing cancer development. Acetylates HSPA1A and HSPA1B at 'Lys-77' which enhances its chaperone activity and leads to preferential binding to co-chaperone HOPX. Acetylates HIST1H4A. Acts as a negative regulator of sister chromatid cohesion during mitosis. The sequence is that of N-alpha-acetyltransferase 10 (NAA10) from Homo sapiens (Human).